Reading from the N-terminus, the 214-residue chain is 3,4-dihydroxy-2-butanone 4-phosphate synthase (214 aa).

Residues 37–38, D42, 150–154, and E174 each bind D-ribulose 5-phosphate; these read RE and RRGHT. Residue E38 participates in Mg(2+) binding. Residue H153 coordinates Mg(2+).

It belongs to the DHBP synthase family. Homodimer. Mg(2+) serves as cofactor. Requires Mn(2+) as cofactor.

The catalysed reaction is D-ribulose 5-phosphate = (2S)-2-hydroxy-3-oxobutyl phosphate + formate + H(+). The protein operates within cofactor biosynthesis; riboflavin biosynthesis; 2-hydroxy-3-oxobutyl phosphate from D-ribulose 5-phosphate: step 1/1. Catalyzes the conversion of D-ribulose 5-phosphate to formate and 3,4-dihydroxy-2-butanone 4-phosphate. This chain is 3,4-dihydroxy-2-butanone 4-phosphate synthase, found in Nitratidesulfovibrio vulgaris (strain DP4) (Desulfovibrio vulgaris).